The primary structure comprises 260 residues: 23S rRNA (guanosine-2'-O-)-methyltransferase RlmB (260 aa).

Positions 197, 217, and 226 each coordinate S-adenosyl-L-methionine.

This sequence belongs to the class IV-like SAM-binding methyltransferase superfamily. RNA methyltransferase TrmH family. RlmB subfamily.

It localises to the cytoplasm. The catalysed reaction is guanosine(2251) in 23S rRNA + S-adenosyl-L-methionine = 2'-O-methylguanosine(2251) in 23S rRNA + S-adenosyl-L-homocysteine + H(+). In terms of biological role, specifically methylates the ribose of guanosine 2251 in 23S rRNA. This is 23S rRNA (guanosine-2'-O-)-methyltransferase RlmB from Nitrosomonas europaea (strain ATCC 19718 / CIP 103999 / KCTC 2705 / NBRC 14298).